A 478-amino-acid chain; its full sequence is PRAME family member 15 (478 aa).

The LRR 1; degenerate repeat unit spans residues Arg99–Cys126. One copy of the LRR 2; degenerate repeat lies at His181–Asn205. One copy of the LRR 3; degenerate repeat lies at Leu206–His232. The stretch at Met233 to Lys268 is one LRR 4; degenerate repeat. LRR repeat units follow at residues Leu269–Leu294, Lys295–Lys326, Thr327–Leu347, Ala351–Arg378, and Cys379–His403.

The protein belongs to the PRAME family.

In Homo sapiens (Human), this protein is PRAME family member 15.